A 666-amino-acid chain; its full sequence is 1-deoxy-D-xylulose-5-phosphate synthase (666 aa).

Thiamine diphosphate is bound by residues His-103 and 144-146; that span reads AHS. Asp-175 serves as a coordination point for Mg(2+). Thiamine diphosphate contacts are provided by residues 176-177, Asn-204, Tyr-314, and Glu-396; that span reads GA. Asn-204 lines the Mg(2+) pocket.

Belongs to the transketolase family. DXPS subfamily. As to quaternary structure, homodimer. Mg(2+) serves as cofactor. The cofactor is thiamine diphosphate.

The enzyme catalyses D-glyceraldehyde 3-phosphate + pyruvate + H(+) = 1-deoxy-D-xylulose 5-phosphate + CO2. It functions in the pathway metabolic intermediate biosynthesis; 1-deoxy-D-xylulose 5-phosphate biosynthesis; 1-deoxy-D-xylulose 5-phosphate from D-glyceraldehyde 3-phosphate and pyruvate: step 1/1. Its function is as follows. Catalyzes the acyloin condensation reaction between C atoms 2 and 3 of pyruvate and glyceraldehyde 3-phosphate to yield 1-deoxy-D-xylulose-5-phosphate (DXP). The sequence is that of 1-deoxy-D-xylulose-5-phosphate synthase from Nitrobacter winogradskyi (strain ATCC 25391 / DSM 10237 / CIP 104748 / NCIMB 11846 / Nb-255).